Consider the following 56-residue polypeptide: Small ribosomal subunit protein uS14z/uS14y/uS14x (56 aa).

Zn(2+) contacts are provided by Cys-21, Cys-24, Cys-39, and Cys-42.

The protein belongs to the universal ribosomal protein uS14 family. The cofactor is Zn(2+).

In Arabidopsis thaliana (Mouse-ear cress), this protein is Small ribosomal subunit protein uS14z/uS14y/uS14x (RPS29A).